Consider the following 228-residue polypeptide: Woronin body membrane protein wscA (228 aa).

4 consecutive transmembrane segments (helical) span residues M89–Q109, L130–A150, A162–A182, and F185–Y205.

It belongs to the peroxisomal membrane protein PXMP2/4 family. Self-assembles into detergent-resistant oligomers and forms a complex with hexA assemblies.

It localises to the peroxisome membrane. Its subcellular location is the cell septum. Its function is as follows. Woronin sorting complex protein involved in both Woronin bodies (WB) formation and inherence. Localizes to large peroxisome membranes where it self-assembles into detergent-resistant oligomers that envelop hex-1 assemblies, producing asymmetrical nascent WBs. These structures are then delivered to the cell cortex, which permits partitioning of the nascent WB and WB inheritance. This Aspergillus fumigatus (strain ATCC MYA-4609 / CBS 101355 / FGSC A1100 / Af293) (Neosartorya fumigata) protein is Woronin body membrane protein wscA.